Reading from the N-terminus, the 122-residue chain is MADFNSPIQYLKEDSRDRTSIGSLEYDENADTMIPSFAAGLEEFEPIPDFDPTTSTSLYSQLTHNMEKIAEEEDNNFLHDTREFTSLVPDEADNKPEDDEESGAKPKKKKHLFPKLSSHKSK.

Disordered stretches follow at residues 1-27 and 73-122; these read MADFNSPIQYLKEDSRDRTSIGSLEYD and EDNN…HKSK. A2 is subject to N-acetylalanine; by host. Basic residues predominate over residues 105–122; that stretch reads KPKKKKHLFPKLSSHKSK.

It belongs to the asfivirus structural protein p14.5 family. As to quaternary structure, interacts with the major capsid protein. Interacts with host IRF3; this interaction interferes with the recruitment of IRF3 to TBK1. In terms of processing, acetylated.

It localises to the virion. In terms of biological role, structural protein required for transport of intracellular particles from the assembly sites to the plasma membrane. Binds to both ssDNA and dsDNA. Suppressed the activation of the cGAS/STING pathway by interfering with the recruitment of IRF3 to TBK1, which in turn suppresses IRF3 phosphorylation, decreasing interferon production. This is Structural protein p14.5 from African swine fever virus (isolate Warthog/Namibia/Wart80/1980) (ASFV).